Here is a 294-residue protein sequence, read N- to C-terminus: Protein RarD (294 aa).

Topologically, residues 1–11 (MDAKQTRQGVL) are cytoplasmic. The chain crosses the membrane as a helical span at residues 12-34 (LALAAYFIWGIAPAYFKLIYYVP). One can recognise an EamA domain in the interval 18 to 145 (FIWGIAPAYF…AVCGVLVQLW (128 aa)). Residues 35–37 (ADE) are Periplasmic-facing. The chain crosses the membrane as a helical span at residues 38–60 (ILTHRVIWSFFFMVALLSVSRQW). At 61-72 (RQVKRLLKTPKK) the chain is on the cytoplasmic side. The chain crosses the membrane as a helical span at residues 73 to 95 (IFLLALSAVLVGGNWLLFIWAVN). At 96-99 (NHHM) the chain is on the periplasmic side. Residues 100-122 (LEASLGYFINPLVNILLGMIFLG) form a helical membrane-spanning segment. The Cytoplasmic segment spans residues 123–128 (ERFRRM). Residues 129 to 146 (QWLAVILAVCGVLVQLWT) traverse the membrane as a helical segment. Residues 147–149 (FGS) lie on the Periplasmic side of the membrane. The helical transmembrane segment at 150-167 (LPIIALGLAFSFAFYGLV) threads the bilayer. Topologically, residues 168-179 (RKKIAVEAQTGM) are cytoplasmic. Residues 180-197 (LVETLWLLPVAAIYLFGI) form a helical membrane-spanning segment. At 198–211 (ADSPTSHMGQNALS) the chain is on the periplasmic side. The helical transmembrane segment at 212-234 (LNLLLMAAGVVTTIPLLCFTGAA) threads the bilayer. Topologically, residues 235–238 (TRLR) are cytoplasmic. A helical transmembrane segment spans residues 239 to 261 (LSTLGFFQYIGPTLMFLLAVTFY). Residues 262–270 (GEVPGADKM) are Periplasmic-facing. Residues 271-290 (VTFAFIWVALAIFVMDAIYT) form a helical membrane-spanning segment. Topologically, residues 291 to 294 (QRKK) are cytoplasmic.

The protein belongs to the EamA transporter family.

The protein resides in the cell inner membrane. The polypeptide is Protein RarD (rarD) (Salmonella typhimurium (strain LT2 / SGSC1412 / ATCC 700720)).